The sequence spans 251 residues: Cell division protein ZapD (251 aa).

This sequence belongs to the ZapD family. As to quaternary structure, interacts with FtsZ.

Its subcellular location is the cytoplasm. Functionally, cell division factor that enhances FtsZ-ring assembly. Directly interacts with FtsZ and promotes bundling of FtsZ protofilaments, with a reduction in FtsZ GTPase activity. The chain is Cell division protein ZapD from Azoarcus sp. (strain BH72).